Reading from the N-terminus, the 496-residue chain is Putative aldehyde dehydrogenase-like protein C922.07c (496 aa).

241 to 246 (GSTKVG) is an NAD(+) binding site. Catalysis depends on glutamate 263, which acts as the Proton acceptor. Cysteine 297 (nucleophile) is an active-site residue.

The protein belongs to the aldehyde dehydrogenase family.

The protein localises to the cytoplasm. The protein resides in the nucleus. The polypeptide is Putative aldehyde dehydrogenase-like protein C922.07c (Schizosaccharomyces pombe (strain 972 / ATCC 24843) (Fission yeast)).